The following is a 29-amino-acid chain: Lambda-theraphotoxin-Ec2c (29 aa).

Disulfide bonds link Cys-2/Cys-16, Cys-9/Cys-21, and Cys-15/Cys-25.

It belongs to the neurotoxin 30 (phrixotoxin) family. As to expression, expressed by the venom gland.

The protein resides in the secreted. Both insecticidal and vertebrate neurotoxin that potently blocks insect calcium-activated potassium (BKCa) channels (Slo-type) in cockroach dorsal unpaired median (DUM) neurons (IC(50)=24.6 nM). This occurs in the absence of any shifts in the voltage dependence of activation. May interact with the turret and/or loop region of the external entrance to the channel and does not project deeply into the pore of the channel. Also shows toxicity to mice by introcerebroventicular injection. The polypeptide is Lambda-theraphotoxin-Ec2c (Eucratoscelus constrictus (African red-rump baboon spider)).